Reading from the N-terminus, the 456-residue chain is Bifunctional protein GlmU (456 aa).

Residues 1–228 (MPQNTLNIVI…SHLAAGVNNK (228 aa)) are pyrophosphorylase. UDP-N-acetyl-alpha-D-glucosamine is bound by residues 11-14 (LAAG), Lys25, Gln75, 80-81 (GT), 102-104 (YGD), Gly138, Glu153, Asn168, and Asn226. Asp104 contributes to the Mg(2+) binding site. Position 226 (Asn226) interacts with Mg(2+). Residues 229-249 (LQLAELERIFQTEQAQELLKA) form a linker region. An N-acetyltransferase region spans residues 250–456 (GVTLRDPARF…GWVRPEKNKQ (207 aa)). UDP-N-acetyl-alpha-D-glucosamine is bound by residues Arg332 and Lys350. His362 functions as the Proton acceptor in the catalytic mechanism. 2 residues coordinate UDP-N-acetyl-alpha-D-glucosamine: Tyr365 and Asn376. Residues Ala379, 385 to 386 (NY), Ser404, Ala422, and Arg439 each bind acetyl-CoA.

This sequence in the N-terminal section; belongs to the N-acetylglucosamine-1-phosphate uridyltransferase family. In the C-terminal section; belongs to the transferase hexapeptide repeat family. Homotrimer. The cofactor is Mg(2+).

It localises to the cytoplasm. The catalysed reaction is alpha-D-glucosamine 1-phosphate + acetyl-CoA = N-acetyl-alpha-D-glucosamine 1-phosphate + CoA + H(+). It carries out the reaction N-acetyl-alpha-D-glucosamine 1-phosphate + UTP + H(+) = UDP-N-acetyl-alpha-D-glucosamine + diphosphate. The protein operates within nucleotide-sugar biosynthesis; UDP-N-acetyl-alpha-D-glucosamine biosynthesis; N-acetyl-alpha-D-glucosamine 1-phosphate from alpha-D-glucosamine 6-phosphate (route II): step 2/2. Its pathway is nucleotide-sugar biosynthesis; UDP-N-acetyl-alpha-D-glucosamine biosynthesis; UDP-N-acetyl-alpha-D-glucosamine from N-acetyl-alpha-D-glucosamine 1-phosphate: step 1/1. It functions in the pathway bacterial outer membrane biogenesis; LPS lipid A biosynthesis. Its function is as follows. Catalyzes the last two sequential reactions in the de novo biosynthetic pathway for UDP-N-acetylglucosamine (UDP-GlcNAc). The C-terminal domain catalyzes the transfer of acetyl group from acetyl coenzyme A to glucosamine-1-phosphate (GlcN-1-P) to produce N-acetylglucosamine-1-phosphate (GlcNAc-1-P), which is converted into UDP-GlcNAc by the transfer of uridine 5-monophosphate (from uridine 5-triphosphate), a reaction catalyzed by the N-terminal domain. The protein is Bifunctional protein GlmU of Neisseria meningitidis serogroup A / serotype 4A (strain DSM 15465 / Z2491).